We begin with the raw amino-acid sequence, 758 residues long: 5-methyltetrahydropteroyltriglutamate--homocysteine methyltransferase (758 aa).

Residues 17–20 and K113 contribute to the 5-methyltetrahydropteroyltri-L-glutamate site; that span reads RELK. L-homocysteine is bound by residues 433–435 and E486; that span reads IGS. Residues 433-435 and E486 each bind L-methionine; that span reads IGS. Residues 517-518 and W563 each bind 5-methyltetrahydropteroyltri-L-glutamate; that span reads RC. Residue D601 participates in L-homocysteine binding. D601 serves as a coordination point for L-methionine. E607 is a 5-methyltetrahydropteroyltri-L-glutamate binding site. 3 residues coordinate Zn(2+): H643, C645, and E667. The Proton donor role is filled by H696. C728 lines the Zn(2+) pocket.

This sequence belongs to the vitamin-B12 independent methionine synthase family. Zn(2+) serves as cofactor.

The catalysed reaction is 5-methyltetrahydropteroyltri-L-glutamate + L-homocysteine = tetrahydropteroyltri-L-glutamate + L-methionine. It participates in amino-acid biosynthesis; L-methionine biosynthesis via de novo pathway; L-methionine from L-homocysteine (MetE route): step 1/1. In terms of biological role, catalyzes the transfer of a methyl group from 5-methyltetrahydrofolate to homocysteine resulting in methionine formation. This chain is 5-methyltetrahydropteroyltriglutamate--homocysteine methyltransferase, found in Nitrosomonas europaea (strain ATCC 19718 / CIP 103999 / KCTC 2705 / NBRC 14298).